The following is a 514-amino-acid chain: Pantothenate transporter liz1 (514 aa).

12 helical membrane-spanning segments follow: residues 24-44, 72-92, 98-118, 128-148, 159-179, 194-214, 263-283, 300-320, 329-349, 357-377, 390-410, and 423-443; these read LLIK…FINY, INVV…YALQ, LWFS…FAVH, FFMA…LGAW, GIFS…QTAV, WLFI…LFLF, GLCI…NVLM, NYPT…SVIS, WPFG…LLAW, FFAY…FSWA, VVVF…APIM, and LIGL…VSYM.

The protein belongs to the major facilitator superfamily. Allantoate permease family.

Its subcellular location is the cell membrane. Its function is as follows. Transports pantothenate into the cell. This chain is Pantothenate transporter liz1 (liz1), found in Schizosaccharomyces pombe (strain 972 / ATCC 24843) (Fission yeast).